Reading from the N-terminus, the 324-residue chain is Beta-ketoacyl-[acyl-carrier-protein] synthase III (324 aa).

Active-site residues include Cys112 and His249. Residues 250 to 254 (QANRR) form an ACP-binding region. The active site involves Asn279.

Belongs to the thiolase-like superfamily. FabH family. In terms of assembly, homodimer.

The protein resides in the cytoplasm. The catalysed reaction is malonyl-[ACP] + acetyl-CoA + H(+) = 3-oxobutanoyl-[ACP] + CO2 + CoA. It functions in the pathway lipid metabolism; fatty acid biosynthesis. Catalyzes the condensation reaction of fatty acid synthesis by the addition to an acyl acceptor of two carbons from malonyl-ACP. Catalyzes the first condensation reaction which initiates fatty acid synthesis and may therefore play a role in governing the total rate of fatty acid production. Possesses both acetoacetyl-ACP synthase and acetyl transacylase activities. Its substrate specificity determines the biosynthesis of branched-chain and/or straight-chain of fatty acids. In Streptococcus pyogenes serotype M4 (strain MGAS10750), this protein is Beta-ketoacyl-[acyl-carrier-protein] synthase III.